The sequence spans 378 residues: Chaperone protein DnaJ (378 aa).

The J domain maps to 5-70; it reads DYYEVLSVSR…DKKAAYDQFG (66 aa). Residues 133–211 form a CR-type zinc finger; the sequence is GLTKELRIPT…CHGEGRVEKS (79 aa). Positions 146, 149, 163, 166, 185, 188, 199, and 202 each coordinate Zn(2+). CXXCXGXG motif repeat units follow at residues 146-153, 163-170, 185-192, and 199-206; these read CDSCDGSG, CGTCHGQG, CPTCHGRG, and CNKCHGEG.

The protein belongs to the DnaJ family. In terms of assembly, homodimer. Zn(2+) serves as cofactor.

It localises to the cytoplasm. In terms of biological role, participates actively in the response to hyperosmotic and heat shock by preventing the aggregation of stress-denatured proteins and by disaggregating proteins, also in an autonomous, DnaK-independent fashion. Unfolded proteins bind initially to DnaJ; upon interaction with the DnaJ-bound protein, DnaK hydrolyzes its bound ATP, resulting in the formation of a stable complex. GrpE releases ADP from DnaK; ATP binding to DnaK triggers the release of the substrate protein, thus completing the reaction cycle. Several rounds of ATP-dependent interactions between DnaJ, DnaK and GrpE are required for fully efficient folding. Also involved, together with DnaK and GrpE, in the DNA replication of plasmids through activation of initiation proteins. This is Chaperone protein DnaJ from Shewanella sediminis (strain HAW-EB3).